Here is a 259-residue protein sequence, read N- to C-terminus: MTQIHPTAIVSSTAEIHETASIGPYCIVGDNVSIGAGTKLLRHVVVTKNTRIGKNNEIFQFASIGEDCQDLKYNGEETWLEIGDNNSIREACSFHRGTIQDNSLTKIGSNNLFMVNTHIAHDCIVGDGNILANNVGVAGHVHIGNNVILGGNAGVHQFCQIGDYSLVGGGSVILKDVAAMTLVSGNPAQAHGLNIEGMRRKDWSKETINTLRTAYKLIFKSGKTTEEVIEELTQDFLPQEPKVQLLIDSLLSSKRGIIR.

The protein belongs to the transferase hexapeptide repeat family. LpxA subfamily. As to quaternary structure, homotrimer.

The protein localises to the cytoplasm. The enzyme catalyses a (3R)-hydroxyacyl-[ACP] + UDP-N-acetyl-alpha-D-glucosamine = a UDP-3-O-[(3R)-3-hydroxyacyl]-N-acetyl-alpha-D-glucosamine + holo-[ACP]. It participates in glycolipid biosynthesis; lipid IV(A) biosynthesis; lipid IV(A) from (3R)-3-hydroxytetradecanoyl-[acyl-carrier-protein] and UDP-N-acetyl-alpha-D-glucosamine: step 1/6. Its function is as follows. Involved in the biosynthesis of lipid A, a phosphorylated glycolipid that anchors the lipopolysaccharide to the outer membrane of the cell. The polypeptide is Acyl-[acyl-carrier-protein]--UDP-N-acetylglucosamine O-acyltransferase (Psychrobacter sp. (strain PRwf-1)).